The primary structure comprises 290 residues: 4-hydroxybenzoate octaprenyltransferase (290 aa).

A run of 8 helical transmembrane segments spans residues 33 to 53 (LAAL…AVFV), 91 to 111 (LGVR…FVLV), 116 to 136 (WEAV…PFTK), 138 to 158 (FFAM…VIAF), 165 to 185 (VPAT…AYDT), 212 to 232 (VAAI…VLAP), 237 to 257 (WPLW…FTLI), and 269 to 289 (FSKS…GYLL).

It belongs to the UbiA prenyltransferase family. Mg(2+) is required as a cofactor.

It is found in the cell inner membrane. The catalysed reaction is all-trans-octaprenyl diphosphate + 4-hydroxybenzoate = 4-hydroxy-3-(all-trans-octaprenyl)benzoate + diphosphate. The protein operates within cofactor biosynthesis; ubiquinone biosynthesis. Catalyzes the prenylation of para-hydroxybenzoate (PHB) with an all-trans polyprenyl group. Mediates the second step in the final reaction sequence of ubiquinone-8 (UQ-8) biosynthesis, which is the condensation of the polyisoprenoid side chain with PHB, generating the first membrane-bound Q intermediate 3-octaprenyl-4-hydroxybenzoate. The chain is 4-hydroxybenzoate octaprenyltransferase from Acidovorax ebreus (strain TPSY) (Diaphorobacter sp. (strain TPSY)).